A 235-amino-acid chain; its full sequence is Large ribosomal subunit protein uL3 (235 aa).

The disordered stretch occupies residues 138–157; it reads SVSHRSHGSTGGRQDPGKTF. Gln-151 bears the N5-methylglutamine mark.

The protein belongs to the universal ribosomal protein uL3 family. In terms of assembly, part of the 50S ribosomal subunit. Forms a cluster with proteins L14 and L19. Post-translationally, methylated by PrmB.

In terms of biological role, one of the primary rRNA binding proteins, it binds directly near the 3'-end of the 23S rRNA, where it nucleates assembly of the 50S subunit. The chain is Large ribosomal subunit protein uL3 from Rhodospirillum centenum (strain ATCC 51521 / SW).